Consider the following 97-residue polypeptide: Putative pterin-4-alpha-carbinolamine dehydratase (97 aa).

The protein belongs to the pterin-4-alpha-carbinolamine dehydratase family.

It catalyses the reaction (4aS,6R)-4a-hydroxy-L-erythro-5,6,7,8-tetrahydrobiopterin = (6R)-L-erythro-6,7-dihydrobiopterin + H2O. This Ruegeria pomeroyi (strain ATCC 700808 / DSM 15171 / DSS-3) (Silicibacter pomeroyi) protein is Putative pterin-4-alpha-carbinolamine dehydratase.